The sequence spans 345 residues: Phosphoribosylformylglycinamidine cyclo-ligase (345 aa).

Belongs to the AIR synthase family.

It is found in the cytoplasm. It carries out the reaction 2-formamido-N(1)-(5-O-phospho-beta-D-ribosyl)acetamidine + ATP = 5-amino-1-(5-phospho-beta-D-ribosyl)imidazole + ADP + phosphate + H(+). It participates in purine metabolism; IMP biosynthesis via de novo pathway; 5-amino-1-(5-phospho-D-ribosyl)imidazole from N(2)-formyl-N(1)-(5-phospho-D-ribosyl)glycinamide: step 2/2. In Escherichia coli (strain 55989 / EAEC), this protein is Phosphoribosylformylglycinamidine cyclo-ligase.